Here is a 730-residue protein sequence, read N- to C-terminus: Catalase-peroxidase 1 (730 aa).

Positions 92-217 form a cross-link, tryptophyl-tyrosyl-methioninium (Trp-Tyr) (with M-243); sequence WHSAGTYRTT…LGAAVMGLIY (126 aa). Catalysis depends on His93, which acts as the Proton acceptor. Residues 217–243 constitute a cross-link (tryptophyl-tyrosyl-methioninium (Tyr-Met) (with W-92)); it reads YVDPEGPNGNPDPLASAENIRESFGRM. Position 258 (His258) interacts with heme b.

It belongs to the peroxidase family. Peroxidase/catalase subfamily. Homodimer or homotetramer. Heme b is required as a cofactor. Formation of the three residue Trp-Tyr-Met cross-link is important for the catalase, but not the peroxidase activity of the enzyme.

It carries out the reaction H2O2 + AH2 = A + 2 H2O. It catalyses the reaction 2 H2O2 = O2 + 2 H2O. Its function is as follows. Bifunctional enzyme with both catalase and broad-spectrum peroxidase activity. This Haloarcula marismortui (strain ATCC 43049 / DSM 3752 / JCM 8966 / VKM B-1809) (Halobacterium marismortui) protein is Catalase-peroxidase 1.